The chain runs to 359 residues: 3-dehydroquinate synthase (359 aa).

Residues 71–76 (DGEQYK), 104–108 (GVVGD), 128–129 (TT), lysine 141, lysine 150, and 168–171 (TLNT) contribute to the NAD(+) site. Residues glutamate 183, histidine 247, and histidine 264 each coordinate Zn(2+).

It belongs to the sugar phosphate cyclases superfamily. Dehydroquinate synthase family. Requires Co(2+) as cofactor. Zn(2+) is required as a cofactor. NAD(+) serves as cofactor.

Its subcellular location is the cytoplasm. It carries out the reaction 7-phospho-2-dehydro-3-deoxy-D-arabino-heptonate = 3-dehydroquinate + phosphate. It functions in the pathway metabolic intermediate biosynthesis; chorismate biosynthesis; chorismate from D-erythrose 4-phosphate and phosphoenolpyruvate: step 2/7. Functionally, catalyzes the conversion of 3-deoxy-D-arabino-heptulosonate 7-phosphate (DAHP) to dehydroquinate (DHQ). The sequence is that of 3-dehydroquinate synthase from Coxiella burnetii (strain Dugway 5J108-111).